Reading from the N-terminus, the 80-residue chain is MRALRVSQALVRSFSSTARNRLENRVAEKQKIFQADNDLPVHLKGGATDNILYRVTMTLCLGGTVYSLYCLGWASFPHKK.

Residues 1 to 21 constitute a mitochondrion transit peptide; sequence MRALRVSQALVRSFSSTARNR. Residues 22–46 are Mitochondrial matrix-facing; the sequence is LENRVAEKQKIFQADNDLPVHLKGG. Residues 47-75 traverse the membrane as a helical segment; it reads ATDNILYRVTMTLCLGGTVYSLYCLGWAS. The Mitochondrial intermembrane segment spans residues 76 to 80; it reads FPHKK.

This sequence belongs to the cytochrome c oxidase VIIa family. In terms of assembly, component of the complex IV (CIV, cytochrome c oxidase), a multisubunit enzyme composed of 14 subunits. The complex is composed of a catalytic core of 3 subunits MT-CO1, MT-CO2 and MT-CO3, encoded in the mitochondrial DNA, and 11 supernumerary subunits COX4I1 (or COX4I2), COX5A, COX5B, COX6A2 (or COX6A1), COX6B1 (or COX6B2), COX6C, COX7A1 (or COX7A2), COX7B, COX7C, COX8B and NDUFA4, which are encoded in the nuclear genome. The complex exists as a monomer or a dimer and forms supercomplexes (SCs) in the inner mitochondrial membrane with NADH-ubiquinone oxidoreductase (complex I, CI) and ubiquinol-cytochrome c oxidoreductase (cytochrome b-c1 complex, complex III, CIII), resulting in different assemblies (supercomplex SCI(1)III(2)IV(1) and megacomplex MCI(2)III(2)IV(2)).

It localises to the mitochondrion inner membrane. The protein operates within energy metabolism; oxidative phosphorylation. In terms of biological role, component of the mitochondrial respiratory complex IV (CIV, also named cytochrome c oxidase complex), the last enzyme in the mitochondrial electron transport chain which drives oxidative phosphorylation. The CIV complex is the component of the respiratory chain that catalyzes the reduction of oxygen to water. Acts as an assembly factor that specifically drives the homodimerization of CIV complexes, mediating the formation of mitochondrial respiratory supercomplexes (respirasomes) containing two CIV: supercomplxes with two molecules of CIV show improved activity. Despite being highly expressed in brown adipose tissue, not required for thermogenesis. The protein is Cytochrome c oxidase subunit 7A1, mitochondrial (COX7A1) of Sus scrofa (Pig).